A 324-amino-acid polypeptide reads, in one-letter code: NAD kinase (324 aa).

Asp89 (proton acceptor) is an active-site residue. Residues 89–90 (DG), Arg94, 163–164 (NE), Asp193, and 204–209 (TAYAFS) contribute to the NAD(+) site.

The protein belongs to the NAD kinase family. A divalent metal cation serves as cofactor.

Its subcellular location is the cytoplasm. It catalyses the reaction NAD(+) + ATP = ADP + NADP(+) + H(+). In terms of biological role, involved in the regulation of the intracellular balance of NAD and NADP, and is a key enzyme in the biosynthesis of NADP. Catalyzes specifically the phosphorylation on 2'-hydroxyl of the adenosine moiety of NAD to yield NADP. The chain is NAD kinase from Nocardia farcinica (strain IFM 10152).